We begin with the raw amino-acid sequence, 223 residues long: Putative 3-methyladenine DNA glycosylase (223 aa).

Belongs to the DNA glycosylase MPG family.

This Pseudomonas syringae pv. tomato (strain ATCC BAA-871 / DC3000) protein is Putative 3-methyladenine DNA glycosylase.